The sequence spans 947 residues: Testis-expressed protein 11 (947 aa).

Belongs to the SPO22 family. Interacts with SYCP2. Interacts with PBXIP1; may prevent interaction between PBXIP1 and ESR2. Interacts with SHOC1. Interacts with REDIC1. Testis-specific.

It is found in the chromosome. In terms of biological role, regulator of crossing-over during meiosis. Involved in initiation and/or maintenance of chromosome synapsis and formation of crossovers. This Mus musculus (Mouse) protein is Testis-expressed protein 11 (Tex11).